The primary structure comprises 358 residues: Methionine aminopeptidase 2 (358 aa).

Residue histidine 109 participates in substrate binding. Residues aspartate 130, aspartate 141, and histidine 210 each coordinate a divalent metal cation. Histidine 218 contributes to the substrate binding site. 2 residues coordinate a divalent metal cation: glutamate 243 and glutamate 339.

This sequence belongs to the peptidase M24A family. Methionine aminopeptidase eukaryotic type 2 subfamily. Co(2+) serves as cofactor. Zn(2+) is required as a cofactor. Requires Mn(2+) as cofactor. It depends on Fe(2+) as a cofactor.

It is found in the cytoplasm. The enzyme catalyses Release of N-terminal amino acids, preferentially methionine, from peptides and arylamides.. Irreversibly inhibited by the fungal metabolite fumagillin and the fumagillin analog TNP470, antiangiogenic drugs. Its function is as follows. Cotranslationally removes the N-terminal methionine from nascent proteins. The N-terminal methionine is often cleaved when the second residue in the primary sequence is small and uncharged (Met-Ala-, Cys, Gly, Pro, Ser, Thr, or Val). The polypeptide is Methionine aminopeptidase 2 (Encephalitozoon hellem (strain ATCC 50504) (Microsporidian parasite)).